A 212-amino-acid polypeptide reads, in one-letter code: Probable GTP-binding protein EngB (212 aa).

Positions 38-210 (ALPQIAFVGK…KTSLAKCIKL (173 aa)) constitute an EngB-type G domain. GTP is bound by residues 46–53 (GKSNVGKS), 73–77 (GRTRQ), 91–94 (DLPG), 158–161 (TKSD), and 189–191 (VSS). Mg(2+) is bound by residues Ser53 and Thr75.

This sequence belongs to the TRAFAC class TrmE-Era-EngA-EngB-Septin-like GTPase superfamily. EngB GTPase family. The cofactor is Mg(2+).

In terms of biological role, necessary for normal cell division and for the maintenance of normal septation. The protein is Probable GTP-binding protein EngB of Rickettsia bellii (strain OSU 85-389).